Reading from the N-terminus, the 246-residue chain is mRNA-decapping protein g5R (246 aa).

The 149-residue stretch at 91–239 (KYQKFKKNWL…IIGPAFNFIK (149 aa)) folds into the Nudix hydrolase domain. Residues 128-149 (GKPKENESDLACAIREFEEETG) carry the Nudix box motif. Residue Glu-134 participates in Mg(2+) binding. Glu-143 functions as the Nucleophile in the catalytic mechanism. The Mg(2+) site is built by Glu-147 and Glu-169.

It belongs to the Nudix hydrolase family. DIPP subfamily. In terms of assembly, interacts with host RPL23A. The cofactor is Mg(2+). Mn(2+) is required as a cofactor.

It localises to the host rough endoplasmic reticulum. The catalysed reaction is diphospho-myo-inositol polyphosphate + H2O = myo-inositol polyphosphate + phosphate.. Its function is as follows. Decapping enzyme required for the removal of the 5'-end m7GpppN cap tethered to viral and host mRNAs to allow their decay in cells. May therefore accelerate viral and cellular mRNA turnover to eliminate competing host mRNAs and allow stage-specific synthesis of viral proteins. Acceleration of the turnover of cellular transcripts may even promote the shutoff of host protein synthesis. In addition to the mRNA cap, g5R also efficiently hydrolyzes diphosphoinositol polyphosphates. Down-regulation of the level of PP-InsP5 (diphosphoinositol pentakisphosphate) may play a role in viral manipulation of the cellular secretory pathway, a step necessary for the formation of virions. Binds viral and cellular poly(A) mRNAs, thereby decreasing both types of mRNAs. This African swine fever virus (isolate Pig/Kenya/KEN-50/1950) (ASFV) protein is mRNA-decapping protein g5R.